Consider the following 49-residue polypeptide: Photosystem II reaction center protein K (49 aa).

The propeptide occupies 1–12 (MISSIHLRKLLG). The helical transmembrane segment at 24–44 (IIDVLPIIPVLFLLLAFVWQA) threads the bilayer.

Belongs to the PsbK family. In terms of assembly, PSII is composed of 1 copy each of membrane proteins PsbA, PsbB, PsbC, PsbD, PsbE, PsbF, PsbH, PsbI, PsbJ, PsbK, PsbL, PsbM, PsbT, PsbX, PsbY, PsbZ, Psb30/Ycf12, at least 3 peripheral proteins of the oxygen-evolving complex and a large number of cofactors. It forms dimeric complexes.

The protein localises to the plastid. It localises to the chloroplast thylakoid membrane. Its function is as follows. One of the components of the core complex of photosystem II (PSII). PSII is a light-driven water:plastoquinone oxidoreductase that uses light energy to abstract electrons from H(2)O, generating O(2) and a proton gradient subsequently used for ATP formation. It consists of a core antenna complex that captures photons, and an electron transfer chain that converts photonic excitation into a charge separation. The protein is Photosystem II reaction center protein K of Phacus acuminatus.